Here is a 183-residue protein sequence, read N- to C-terminus: Peptide deformylase (183 aa).

Fe cation is bound by residues cysteine 110 and histidine 153. Glutamate 154 is an active-site residue. Histidine 157 provides a ligand contact to Fe cation.

This sequence belongs to the polypeptide deformylase family. Fe(2+) is required as a cofactor.

The enzyme catalyses N-terminal N-formyl-L-methionyl-[peptide] + H2O = N-terminal L-methionyl-[peptide] + formate. Functionally, removes the formyl group from the N-terminal Met of newly synthesized proteins. Requires at least a dipeptide for an efficient rate of reaction. N-terminal L-methionine is a prerequisite for activity but the enzyme has broad specificity at other positions. The polypeptide is Peptide deformylase (Listeria monocytogenes serovar 1/2a (strain ATCC BAA-679 / EGD-e)).